The following is a 153-amino-acid chain: Mitotic-spindle organizing protein 2 (153 aa).

The tract at residues 80-153 is disordered; sequence KVSETSTGDA…SSSSSQLTSN (74 aa). 2 stretches are compositionally biased toward polar residues: residues 81-99 and 107-133; these read VSET…TAVP and KMSS…SATR. Low complexity predominate over residues 134 to 153; that stretch reads GQKSTKSSGSSSSSSQLTSN.

Belongs to the MOZART2 family. In terms of assembly, part of the gamma-tubulin complex. Interacts with TUBG1.

It is found in the cytoplasm. The protein localises to the cytoskeleton. Its subcellular location is the microtubule organizing center. The protein resides in the centrosome. It localises to the spindle. This is Mitotic-spindle organizing protein 2 (mzt2) from Danio rerio (Zebrafish).